The following is a 665-amino-acid chain: Lamin-A (665 aa).

Met-1 carries the N-acetylmethionine modification. Residues 1–29 (METPGQKRATRSTHTPLSPTRITRLQEKE) form a head region. Phosphoserine is present on Ser-18. Residues 27 to 383 (EKEDLQGLND…KLLEGEEERL (357 aa)) enclose the IF rod domain. Residues 30-66 (DLQGLNDRLAVYIDKVRSLELENARLRLRITESEDVI) are coil 1A. The linker 1 stretch occupies residues 67–76 (SREVTGIKSA). The coil 1B stretch occupies residues 77–214 (YETELADARK…SIYNEEMRET (138 aa)). The linker 2 stretch occupies residues 215-238 (KRRHETRLVEVDNGRQREFESKLA). Residues 239–383 (DALHELRAQH…KLLEGEEERL (145 aa)) form a coil 2 region. 3 disordered regions span residues 381–441 (ERLR…SVEE), 550–581 (DDED…GEYN), and 602–641 (ASQG…LGES). The tail stretch occupies residues 384-664 (RLSPSPNTQK…AQVAPQNCSI (281 aa)). Ser-388 is modified (phosphoserine). Positions 399–411 (IASHSGAHISSSA) are enriched in low complexity. A Nuclear localization signal motif is present at residues 413 to 418 (KRRRLE). Residues 425 to 542 (SSFTQHARTT…EEVAMRKLVR (118 aa)) enclose the LTD domain. Over residues 427–436 (FTQHARTTGK) the composition is skewed to polar residues. Over residues 605 to 630 (GSGLVTGSSGSSSSSVTLTRTYRSTG) the composition is skewed to low complexity. Cys-662 carries the post-translational modification Cysteine methyl ester. The S-farnesyl cysteine moiety is linked to residue Cys-662. The propeptide at 663 to 665 (SIM) is removed in mature form.

Belongs to the intermediate filament family. In terms of assembly, homodimer. Lamin dimers then assemble into dimeric head-to-tail polymers. Ultimately, two head-to-tail polymers assemble laterally into a protofilament with a uniformly shaped rod of 3.5 nm in diameter. In terms of processing, phosphorylation plays a key role in lamin organization, subcellular localization and nuclear envelope disintegration. Phosphorylation by CDK1 at Ser-18 at the onset of mitosis drives lamin disassembly and nuclear envelope breakdown.

It is found in the nucleus lamina. Its subcellular location is the nucleus envelope. The protein localises to the nucleus. The protein resides in the nucleoplasm. It localises to the nucleus matrix. Functionally, lamins are intermediate filament proteins that assemble into a filamentous meshwork, and which constitute the major components of the nuclear lamina, a fibrous layer on the nucleoplasmic side of the inner nuclear membrane. Lamins provide a framework for the nuclear envelope, bridging the nuclear envelope and chromatin, thereby playing an important role in nuclear assembly, chromatin organization, nuclear membrane and telomere dynamics. The structural integrity of the lamina is strictly controlled by the cell cycle, as seen by the disintegration and formation of the nuclear envelope in prophase and telophase, respectively. The chain is Lamin-A (lmna) from Xenopus laevis (African clawed frog).